The primary structure comprises 543 residues: Chaperonin GroEL 1 (543 aa).

Residues 30 to 33, Lys51, 87 to 91, Gly415, and Asp496 contribute to the ATP site; these read TLGP and DGTTT.

The protein belongs to the chaperonin (HSP60) family. Forms a cylinder of 14 subunits composed of two heptameric rings stacked back-to-back. Interacts with the co-chaperonin GroES.

The protein localises to the cytoplasm. It carries out the reaction ATP + H2O + a folded polypeptide = ADP + phosphate + an unfolded polypeptide.. In terms of biological role, together with its co-chaperonin GroES, plays an essential role in assisting protein folding. The GroEL-GroES system forms a nano-cage that allows encapsulation of the non-native substrate proteins and provides a physical environment optimized to promote and accelerate protein folding. The protein is Chaperonin GroEL 1 of Roseobacter denitrificans (strain ATCC 33942 / OCh 114) (Erythrobacter sp. (strain OCh 114)).